The following is a 285-amino-acid chain: Formate channel FocA (285 aa).

Over 1–30 (MKADNPFDLLLPAAMAKVAEEAGVYKATKH) the chain is Cytoplasmic. The chain crosses the membrane as a helical span at residues 31 to 56 (PLKTFYLAITAGVFISIAFVFYITAT). Over 57–64 (TGTGTMPF) the chain is Periplasmic. Residues 65 to 85 (GMAKLVGGICFSLGLILCVVC) traverse the membrane as a helical segment. Topologically, residues 86-112 (GADLFTSTVLIVVAKASGRITWGQLAK) are cytoplasmic. Residues 113–135 (NWLNVYFGNLVGALLFVLLMWLS) traverse the membrane as a helical segment. Residues 136 to 160 (GEYMTANGQWGLNVLQTADHKVHHT) are Periplasmic-facing. Residues 161-181 (FIEAVCLGILANLMVCLAVWM) form a helical membrane-spanning segment. Residues 182 to 187 (SYSGRS) are Cytoplasmic-facing. Residues 188 to 205 (LMDKAFIMVLPVAMFVAS) traverse the membrane as a helical segment. Over 206–249 (GFEHSIANMFMIPMGIVIRDFASPEFWTAVGSAPENFSHLTVMN) the chain is Periplasmic. The helical transmembrane segment at 250-276 (FITDNLIPVTIGNIIGGGLLVGLTYWV) threads the bilayer. Over 277–285 (IYLRENDHH) the chain is Cytoplasmic.

It belongs to the FNT transporter (TC 1.A.16) family. As to quaternary structure, homopentamer.

Its subcellular location is the cell inner membrane. The enzyme catalyses formate(in) = formate(out). Its function is as follows. Involved in the bidirectional transport of formate during mixed-acid fermentation. Functions to maintain relatively constant intracellular formate levels during growth, using different mechanisms for efflux and uptake of the anion. Is impermeable to water. The chain is Formate channel FocA from Escherichia coli O157:H7.